A 621-amino-acid polypeptide reads, in one-letter code: Autonomous transposable element EN-1 mosaic protein (621 aa).

Disordered stretches follow at residues 1 to 119 (MFRM…PPRR), 428 to 447 (YTRR…PSAR), 498 to 530 (QQPP…TSVQ), and 549 to 621 (RQPG…PPTE). 2 stretches are compositionally biased toward polar residues: residues 27–39 (EGTT…QEQL) and 47–61 (RGSS…TTSR). The segment covering 82-102 (AAVDAEAEEAAAELDDGEETS) has biased composition (acidic residues). Residues 570 to 594 (PPRGQSQSPGLPSHSPGSGSGSHHA) are compositionally biased toward low complexity.

In terms of biological role, this protein has most probably three functions; the mutator (M) function, for excision and transposition; the suppressor (S) function, which inhibits residual gene activity of certain alleles in which inhibitor elements are integrated; an activator (A) function is proposed, because inactive SPM can be activated by a second SPM. The polypeptide is Autonomous transposable element EN-1 mosaic protein (Zea mays (Maize)).